A 373-amino-acid chain; its full sequence is Queuine tRNA-ribosyltransferase (373 aa).

The active-site Proton acceptor is the D93. Residues 93–97 (DSGGF), D147, Q190, and G219 contribute to the substrate site. An RNA binding region spans residues 250 to 256 (GVGEPVD). The Nucleophile role is filled by D269. The segment at 274 to 278 (TRLAR) is RNA binding; important for wobble base 34 recognition. Residues C307, C309, C312, and H338 each contribute to the Zn(2+) site.

It belongs to the queuine tRNA-ribosyltransferase family. As to quaternary structure, homodimer. Within each dimer, one monomer is responsible for RNA recognition and catalysis, while the other monomer binds to the replacement base PreQ1. Requires Zn(2+) as cofactor.

It carries out the reaction 7-aminomethyl-7-carbaguanine + guanosine(34) in tRNA = 7-aminomethyl-7-carbaguanosine(34) in tRNA + guanine. The protein operates within tRNA modification; tRNA-queuosine biosynthesis. Its function is as follows. Catalyzes the base-exchange of a guanine (G) residue with the queuine precursor 7-aminomethyl-7-deazaguanine (PreQ1) at position 34 (anticodon wobble position) in tRNAs with GU(N) anticodons (tRNA-Asp, -Asn, -His and -Tyr). Catalysis occurs through a double-displacement mechanism. The nucleophile active site attacks the C1' of nucleotide 34 to detach the guanine base from the RNA, forming a covalent enzyme-RNA intermediate. The proton acceptor active site deprotonates the incoming PreQ1, allowing a nucleophilic attack on the C1' of the ribose to form the product. After dissociation, two additional enzymatic reactions on the tRNA convert PreQ1 to queuine (Q), resulting in the hypermodified nucleoside queuosine (7-(((4,5-cis-dihydroxy-2-cyclopenten-1-yl)amino)methyl)-7-deazaguanosine). In Fusobacterium nucleatum subsp. nucleatum (strain ATCC 25586 / DSM 15643 / BCRC 10681 / CIP 101130 / JCM 8532 / KCTC 2640 / LMG 13131 / VPI 4355), this protein is Queuine tRNA-ribosyltransferase.